Reading from the N-terminus, the 212-residue chain is Ribosomal RNA small subunit methyltransferase G (212 aa).

S-adenosyl-L-methionine-binding positions include Gly80, Leu85, 131–132 (AE), and Arg146.

This sequence belongs to the methyltransferase superfamily. RNA methyltransferase RsmG family.

It localises to the cytoplasm. It carries out the reaction guanosine(527) in 16S rRNA + S-adenosyl-L-methionine = N(7)-methylguanosine(527) in 16S rRNA + S-adenosyl-L-homocysteine. Functionally, specifically methylates the N7 position of guanine in position 527 of 16S rRNA. The sequence is that of Ribosomal RNA small subunit methyltransferase G from Xylella fastidiosa (strain M23).